Here is a 1058-residue protein sequence, read N- to C-terminus: Carbamoyl phosphate synthase large chain (1058 aa).

The interval 1–401 is carboxyphosphate synthetic domain; it reads MPKRKDIQKI…SLLKACRSLE (401 aa). ATP is bound by residues Arg129, Arg169, Gly175, Gly176, Arg208, Ile210, Glu215, Gly241, Ile242, His243, Gln284, and Glu298. The region spanning 133-327 is the ATP-grasp 1 domain; sequence KQLMQELDQP…IAKLAAKIAV (195 aa). Positions 284, 298, and 300 each coordinate Mg(2+). Residues Gln284, Glu298, and Asn300 each coordinate Mn(2+). An oligomerization domain region spans residues 402-546; it reads IGVCHNEMTS…YSTYELENES (145 aa). The tract at residues 547-929 is carbamoyl phosphate synthetic domain; that stretch reads VQSNKESILV…ALYKAFEANN (383 aa). Positions 671–861 constitute an ATP-grasp 2 domain; the sequence is EKALKELGIP…MAQIATKLIL (191 aa). Arg707, Ser746, Ile748, Glu752, Gly777, Val778, His779, Ser780, Gln820, and Glu832 together coordinate ATP. Residues Gln820, Glu832, and Asn834 each contribute to the Mg(2+) site. Mn(2+) contacts are provided by Gln820, Glu832, and Asn834. The 129-residue stretch at 930–1058 folds into the MGS-like domain; the sequence is SHLSEFGQIV…ESRCFNIEAI (129 aa). The interval 930 to 1058 is allosteric domain; the sequence is SHLSEFGQIV…ESRCFNIEAI (129 aa).

It belongs to the CarB family. As to quaternary structure, composed of two chains; the small (or glutamine) chain promotes the hydrolysis of glutamine to ammonia, which is used by the large (or ammonia) chain to synthesize carbamoyl phosphate. Tetramer of heterodimers (alpha,beta)4. The cofactor is Mg(2+). It depends on Mn(2+) as a cofactor.

It catalyses the reaction hydrogencarbonate + L-glutamine + 2 ATP + H2O = carbamoyl phosphate + L-glutamate + 2 ADP + phosphate + 2 H(+). It carries out the reaction hydrogencarbonate + NH4(+) + 2 ATP = carbamoyl phosphate + 2 ADP + phosphate + 2 H(+). It functions in the pathway amino-acid biosynthesis; L-arginine biosynthesis; carbamoyl phosphate from bicarbonate: step 1/1. Its pathway is pyrimidine metabolism; UMP biosynthesis via de novo pathway; (S)-dihydroorotate from bicarbonate: step 1/3. Functionally, large subunit of the glutamine-dependent carbamoyl phosphate synthetase (CPSase). CPSase catalyzes the formation of carbamoyl phosphate from the ammonia moiety of glutamine, carbonate, and phosphate donated by ATP, constituting the first step of 2 biosynthetic pathways, one leading to arginine and/or urea and the other to pyrimidine nucleotides. The large subunit (synthetase) binds the substrates ammonia (free or transferred from glutamine from the small subunit), hydrogencarbonate and ATP and carries out an ATP-coupled ligase reaction, activating hydrogencarbonate by forming carboxy phosphate which reacts with ammonia to form carbamoyl phosphate. The sequence is that of Carbamoyl phosphate synthase large chain from Streptococcus pyogenes serotype M49 (strain NZ131).